Here is a 985-residue protein sequence, read N- to C-terminus: Guanine nucleotide exchange protein smcr8b (985 aa).

Residues 47–225 (ISSAKLKKDF…VKCSSEREPI (179 aa)) form the uDENN FLCN/SMCR8-type domain. Residues 242–292 (NEKSSHTDEISPQEKDGCGNSRKVEVKLENENRSHFEHEQYGKQRKDKPDK) show a composition bias toward basic and acidic residues. 3 disordered regions span residues 242 to 301 (NEKS…PLAN), 502 to 528 (QSQV…SPAE), and 639 to 659 (EESP…EDNN). In terms of domain architecture, cDENN FLCN/SMCR8-type spans 390–895 (RLKTLEELCD…LINLLVEPKS (506 aa)). The segment covering 502-514 (QSQVQHSTLNTPS) has biased composition (polar residues). One can recognise a dDENN FLCN/SMCR8-type domain in the interval 904–962 (FTFAQSVQSKLVTKAFLLTFSHGHPSPSRPQGSSGTECFLSELHTDDKKILRYLSELIK).

The protein belongs to the SMCR8 family. Component of the C9orf72-SMCR8 complex. The C9orf72-SMCR8 complex associates with the ATG1/ULK1 kinase complex.

The protein localises to the cytoplasm. Its subcellular location is the nucleus. Component of the C9orf72-SMCR8 complex, a complex that has guanine nucleotide exchange factor (GEF) activity and regulates autophagy. In the complex, C9orf72 and SMCR8 probably constitute the catalytic subunits that promote the exchange of GDP to GTP, converting inactive GDP-bound RAB8A and RAB39B into their active GTP-bound form, thereby promoting autophagosome maturation. The C9orf72-SMCR8 complex also acts as a negative regulator of autophagy initiation by interacting with the ATG1/ULK1 kinase complex and inhibiting its protein kinase activity. This is Guanine nucleotide exchange protein smcr8b (smcr8b) from Danio rerio (Zebrafish).